The chain runs to 575 residues: Transmembrane protein 108 (575 aa).

A helical transmembrane segment spans residues 9–29; sequence YCQLLSFLLILALTEALAFAI. Residues 31 to 169 form an interaction with SH3GL2 region; it reads EPSPRESLQV…TTTRRPPRPP (139 aa). The disordered stretch occupies residues 65–398; the sequence is MLTPNPDGPP…PSRVSESTIS (334 aa). Residues 74-87 show a composition bias toward low complexity; the sequence is PSQAAAPMATPTPR. Polar residues predominate over residues 95–115; it reads HTISTIAATVTAPHSESSLST. Over residues 146–160 the composition is skewed to low complexity; that stretch reads PPGATSRPTTAPPRT. The segment at 173-407 is interaction with DST (isoform 1); that stretch reads RKGAGNSSRP…SGAKEETVAT (235 aa). Positions 244–271 are enriched in polar residues; the sequence is YSSSPQPQTVAATTVPSNTSWAPTTTSL. Positions 290–318 are enriched in low complexity; the sequence is TFTSQGGTPDATAASGAPVSPQAAPVPSQ. The span at 329–352 shows a compositional bias: polar residues; that stretch reads PSHSDSWLTVTPGTSRPLSTSSGV. The segment covering 353 to 366 has biased composition (low complexity); it reads FTAATGPTPAAFDT. Residues 367–398 are compositionally biased toward polar residues; it reads SVSAPSQGIPQGASTTPQAPTHPSRVSESTIS. Residues 469–489 form a helical membrane-spanning segment; that stretch reads IAWVILAISVPISSCSVLLTV. The segment at 490–575 is interaction with CYFIP2; the sequence is CCMKRKKKTA…FVGNDQVSEI (86 aa).

Interacts with DST (isoform 1). Interacts with SH3GL2. Interacts (via N-terminus) with CYFIP1 and CYFIP2; the interactions associate TMEM108 with the WAVE1 complex. In terms of processing, glycosylated.

It is found in the membrane. Its subcellular location is the postsynaptic density. The protein localises to the endosome membrane. The protein resides in the cell projection. It localises to the axon. It is found in the dendrite. Its subcellular location is the early endosome. In terms of biological role, transmembrane protein required for proper cognitive functions. Involved in the development of dentate gyrus (DG) neuron circuitry, is necessary for AMPA receptors surface expression and proper excitatory postsynaptic currents of DG granule neurons. Regulates the organization and stability of the microtubule network of sensory neurons to allow axonal transport. Through the interaction with DST, mediates the docking of the dynein/dynactin motor complex to vesicle cargos for retrograde axonal transport. In hippocampal neurons, required for BDNF-dependent dendrite outgrowth. Cooperates with SH3GL2 and recruits the WAVE1 complex to facilitate actin-dependent BDNF:NTRK2 early endocytic trafficking and mediate signaling from early endosomes. This Homo sapiens (Human) protein is Transmembrane protein 108.